The following is a 535-amino-acid chain: MAKRVAIVGAGVSGLASIKCCLEEGLEPTCFERSDDLGGLWRFTEHVEEGRASLYKSVVSNSCKEMSCYSDFPFPEDYPNYVPNSQFLDYLKMYADRFSLLKSIQFKTTVFSITKCQDFNVSGQWEVVTLHEGKQESAIFDAVMVCTGFLTNPHLPLGCFPGIKTFKGQYFHSRQYKHPDIFKDKRVLVVGMGNSGTDIAVEASHVAKKVFLSTTGGAWVISRVFDSGYPWDMVFTTRFQNFIRNSLPTPIVTWLVAKKMNSWFNHANYGLVPKDRIQLKEPVLNDELPGRIITGKVFIRPSIKEVKENSVVFGNAHNTPSEEPIDVIVFATGYTFAFPFLDESVVKVEDGQASLYKYIFPAHLQKPTLAVIGLIKPLGSMLPTGETQARYTVQVFKGVIKLPPTSVMIKEVNERKENKHNGFGLCYCKALQADYITYIDDLLTSINAKPNLFSLLLTDPLLALTMFFGPYSPYQFRLTGPGKWKGARNAIMTQWDRTFKVTKTRIVQESSSPFESLLKLFAVLALLVSVFLIFL.

Alanine 2 carries the post-translational modification N-acetylalanine. Residues alanine 2 to proline 513 lie on the Lumenal side of the membrane. FAD contacts are provided by residues glycine 9–serine 13, glutamate 32, leucine 40–tryptophan 41, and asparagine 61–serine 62. Residues serine 60 to asparagine 61 and serine 195 to aspartate 198 contribute to the NADP(+) site. A helical transmembrane segment spans residues phenylalanine 514–phenylalanine 534. Residue leucine 535 is a topological domain, cytoplasmic.

This sequence belongs to the FMO family. The cofactor is FAD. As to expression, liver.

The protein resides in the endoplasmic reticulum membrane. It carries out the reaction hypotaurine + NADPH + O2 + H(+) = taurine + NADP(+) + H2O. It catalyses the reaction hypotaurine + NADH + O2 + H(+) = taurine + NAD(+) + H2O. The enzyme catalyses trimethylamine + NADPH + O2 = trimethylamine N-oxide + NADP(+) + H2O. The catalysed reaction is N,N-dimethylaniline + NADPH + O2 + H(+) = N,N-dimethylaniline N-oxide + NADP(+) + H2O. Broad spectrum monooxygenase that catalyzes the oxygenation of a wide variety of nitrogen- and sulfur-containing compounds including xenobiotics. Catalyzes the S-oxygenation of hypotaurine to produce taurine, an organic osmolyte involved in cell volume regulation as well as a variety of cytoprotective and developmental processes. In vitro, catalyzes the N-oxygenation of trimethylamine (TMA) to produce trimethylamine N-oxide (TMAO) and could therefore participate to the detoxification of this compound that is generated by the action of gut microbiota from dietary precursors such as choline, choline containing compounds, betaine or L-carnitine. The chain is Flavin-containing monooxygenase 1 (FMO1) from Oryctolagus cuniculus (Rabbit).